The chain runs to 537 residues: Eukaryotic translation initiation factor 3 subunit L (537 aa).

One can recognise a PCI domain in the interval 300 to 512; sequence TFSSILLYIQ…IHIADTKVSH (213 aa).

Belongs to the eIF-3 subunit L family. Component of the eukaryotic translation initiation factor 3 (eIF-3) complex.

It localises to the cytoplasm. Functionally, component of the eukaryotic translation initiation factor 3 (eIF-3) complex, which is involved in protein synthesis of a specialized repertoire of mRNAs and, together with other initiation factors, stimulates binding of mRNA and methionyl-tRNAi to the 40S ribosome. The eIF-3 complex specifically targets and initiates translation of a subset of mRNAs involved in cell proliferation. In Culex quinquefasciatus (Southern house mosquito), this protein is Eukaryotic translation initiation factor 3 subunit L.